The chain runs to 196 residues: MKESIAKVYRKTGETEIKSEINLYGEGKCDIKTGIVFLDHMLNLMARHGLIDLKLQAQGDLQVDSHHTVEDVGIVLGQCFKEALGDKKSIKRYGTSFIPMDEALASVSIDISGRPYIVCDFNFTVDKLGELDTELVEEFLRALTFNAGITLHARVLYGKNNHHMIEAVFKALGRALREAVDKDKRINGVMSTKGIL.

It belongs to the imidazoleglycerol-phosphate dehydratase family.

It localises to the cytoplasm. It carries out the reaction D-erythro-1-(imidazol-4-yl)glycerol 3-phosphate = 3-(imidazol-4-yl)-2-oxopropyl phosphate + H2O. Its pathway is amino-acid biosynthesis; L-histidine biosynthesis; L-histidine from 5-phospho-alpha-D-ribose 1-diphosphate: step 6/9. This is Imidazoleglycerol-phosphate dehydratase from Clostridium botulinum (strain 657 / Type Ba4).